Consider the following 134-residue polypeptide: Retinol-binding protein 2 (134 aa).

Positions 41 and 109 each coordinate all-trans-retinol.

The protein belongs to the calycin superfamily. Fatty-acid binding protein (FABP) family. As to expression, expressed in prenatal liver, intestine and lung, and in adult intestine.

The protein localises to the cytoplasm. Intracellular transport of retinol. The protein is Retinol-binding protein 2 (Rbp2) of Mus musculus (Mouse).